We begin with the raw amino-acid sequence, 427 residues long: Enolase (427 aa).

Glutamine 162 is a (2R)-2-phosphoglycerate binding site. Catalysis depends on glutamate 206, which acts as the Proton donor. Residues aspartate 243, glutamate 286, and aspartate 313 each coordinate Mg(2+). (2R)-2-phosphoglycerate is bound by residues lysine 338, arginine 367, serine 368, and lysine 389. The active-site Proton acceptor is the lysine 338.

This sequence belongs to the enolase family. Mg(2+) is required as a cofactor.

It localises to the cytoplasm. It is found in the secreted. The protein resides in the cell surface. The catalysed reaction is (2R)-2-phosphoglycerate = phosphoenolpyruvate + H2O. The protein operates within carbohydrate degradation; glycolysis; pyruvate from D-glyceraldehyde 3-phosphate: step 4/5. Functionally, catalyzes the reversible conversion of 2-phosphoglycerate (2-PG) into phosphoenolpyruvate (PEP). It is essential for the degradation of carbohydrates via glycolysis. This Methanopyrus kandleri (strain AV19 / DSM 6324 / JCM 9639 / NBRC 100938) protein is Enolase.